Here is a 142-residue protein sequence, read N- to C-terminus: ATP synthase epsilon chain (142 aa).

Belongs to the ATPase epsilon chain family. As to quaternary structure, F-type ATPases have 2 components, CF(1) - the catalytic core - and CF(0) - the membrane proton channel. CF(1) has five subunits: alpha(3), beta(3), gamma(1), delta(1), epsilon(1). CF(0) has three main subunits: a, b and c.

The protein resides in the cell inner membrane. In terms of biological role, produces ATP from ADP in the presence of a proton gradient across the membrane. This Shewanella baltica (strain OS185) protein is ATP synthase epsilon chain.